The sequence spans 636 residues: Threonine--tRNA ligase (636 aa).

Residues 1–60 form the TGS domain; that stretch reads MPIINFNNKEILFNYPISIIEIIKKFDKNLSENCIAAKINGKLLDVSEIINYDGSLELVK. The segment at 242–533 is catalytic; it reads DHRKIGKKLD…ITEEFSGKYP (292 aa). Zn(2+) contacts are provided by C333, H384, and H510.

It belongs to the class-II aminoacyl-tRNA synthetase family. In terms of assembly, homodimer. It depends on Zn(2+) as a cofactor.

Its subcellular location is the cytoplasm. It catalyses the reaction tRNA(Thr) + L-threonine + ATP = L-threonyl-tRNA(Thr) + AMP + diphosphate + H(+). In terms of biological role, catalyzes the attachment of threonine to tRNA(Thr) in a two-step reaction: L-threonine is first activated by ATP to form Thr-AMP and then transferred to the acceptor end of tRNA(Thr). Also edits incorrectly charged L-seryl-tRNA(Thr). This chain is Threonine--tRNA ligase, found in Wigglesworthia glossinidia brevipalpis.